Here is a 284-residue protein sequence, read N- to C-terminus: Methylglyoxal reductase YeaE (284 aa).

It belongs to the aldo/keto reductase family.

It carries out the reaction hydroxyacetone + NADP(+) = methylglyoxal + NADPH + H(+). The catalysed reaction is a primary alcohol + NADP(+) = an aldehyde + NADPH + H(+). Its function is as follows. Aldo-keto reductase that contributes to cellular methylglyoxal detoxification by catalyzing the NADPH-dependent conversion of methylglyoxal to acetol. It also exhibits activity with glyoxal and probably plays a significant role in detoxification of glyoxal in vivo. Can also use aromatic aldehydes such as 4-nitrobenzaldehyde, 3-nitrobenzaldehyde and benzaldehyde, and phenylglyoxal. The sequence is that of Methylglyoxal reductase YeaE (yeaE) from Escherichia coli (strain K12).